A 469-amino-acid chain; its full sequence is Glutamate--tRNA ligase (469 aa).

The 'HIGH' region signature appears at 9–19; the sequence is PSPTGFLHVGG. Zn(2+) is bound by residues cysteine 98, cysteine 100, cysteine 125, and aspartate 127. Positions 236–240 match the 'KMSKS' region motif; sequence KLSKR. Lysine 239 contacts ATP.

It belongs to the class-I aminoacyl-tRNA synthetase family. Glutamate--tRNA ligase type 1 subfamily. As to quaternary structure, monomer. Requires Zn(2+) as cofactor.

Its subcellular location is the cytoplasm. The enzyme catalyses tRNA(Glu) + L-glutamate + ATP = L-glutamyl-tRNA(Glu) + AMP + diphosphate. In terms of biological role, catalyzes the attachment of glutamate to tRNA(Glu) in a two-step reaction: glutamate is first activated by ATP to form Glu-AMP and then transferred to the acceptor end of tRNA(Glu). The polypeptide is Glutamate--tRNA ligase (Shewanella baltica (strain OS185)).